Here is a 156-residue protein sequence, read N- to C-terminus: Small ribosomal subunit protein uS7 (156 aa).

The protein belongs to the universal ribosomal protein uS7 family. As to quaternary structure, part of the 30S ribosomal subunit. Contacts proteins S9 and S11.

Its function is as follows. One of the primary rRNA binding proteins, it binds directly to 16S rRNA where it nucleates assembly of the head domain of the 30S subunit. Is located at the subunit interface close to the decoding center, probably blocks exit of the E-site tRNA. In Metamycoplasma arthritidis (strain 158L3-1) (Mycoplasma arthritidis), this protein is Small ribosomal subunit protein uS7.